The primary structure comprises 264 residues: Phosphonates import ATP-binding protein PhnC (264 aa).

Residues 3–246 form the ABC transporter domain; sequence IRLQEAGLRH…MLDALYANEQ (244 aa). 35–42 contacts ATP; the sequence is GPSGAGKS.

It belongs to the ABC transporter superfamily. Phosphonates importer (TC 3.A.1.9.1) family. In terms of assembly, the complex is composed of two ATP-binding proteins (PhnC), two transmembrane proteins (PhnE) and a solute-binding protein (PhnD).

Its subcellular location is the cell inner membrane. The enzyme catalyses phosphonate(out) + ATP + H2O = phosphonate(in) + ADP + phosphate + H(+). Part of the ABC transporter complex PhnCDE involved in phosphonates import. Responsible for energy coupling to the transport system. The polypeptide is Phosphonates import ATP-binding protein PhnC (Pseudomonas entomophila (strain L48)).